The primary structure comprises 597 residues: Elongation factor 4 (597 aa).

Positions 2 to 184 constitute a tr-type G domain; that stretch reads KNIRNFSIIA…TVVQKIPAPK (183 aa). GTP-binding positions include 14–19 and 131–134; these read DHGKST and NKID.

Belongs to the TRAFAC class translation factor GTPase superfamily. Classic translation factor GTPase family. LepA subfamily.

It is found in the cell inner membrane. The catalysed reaction is GTP + H2O = GDP + phosphate + H(+). Functionally, required for accurate and efficient protein synthesis under certain stress conditions. May act as a fidelity factor of the translation reaction, by catalyzing a one-codon backward translocation of tRNAs on improperly translocated ribosomes. Back-translocation proceeds from a post-translocation (POST) complex to a pre-translocation (PRE) complex, thus giving elongation factor G a second chance to translocate the tRNAs correctly. Binds to ribosomes in a GTP-dependent manner. In Laribacter hongkongensis (strain HLHK9), this protein is Elongation factor 4.